An 849-amino-acid chain; its full sequence is Protein lap1 (849 aa).

LRR repeat units lie at residues Val18–Glu39, Thr41–Cys62, Gly64–Leu85, Gln87–Cys108, His110–Leu131, Ser133–Val155, Asn156–Leu177, Asn179–Leu200, Ser202–Arg224, Asp225–Trp246, Asn248–Leu269, Ser271–Leu292, Gln294–Leu315, Ser317–Cys338, Gln340–Ser362, Lys363–Leu384, and Asn386–Asp407. A disordered region spans residues Asn716 to Lys752. The segment covering Asn725 to Asp735 has biased composition (acidic residues). The segment covering Thr736–Lys752 has biased composition (polar residues). The PDZ domain occupies Val770–Lys849.

This sequence belongs to the LAP (LRR and PDZ) protein family.

In terms of biological role, may have a role in assembling adherens junctions. This Drosophila melanogaster (Fruit fly) protein is Protein lap1.